The chain runs to 724 residues: Peroxidase mlt-7 (724 aa).

The first 24 residues, 1–24, serve as a signal peptide directing secretion; it reads MRRLHRNLSLLFLICILNEYRIES. N-linked (GlcNAc...) asparagine glycosylation occurs at N7. Positions 25–178 are excised as a propeptide; that stretch reads QTLSPPITDR…GCVPQLSDVG (154 aa). Residues 42–76 form the ShKT domain; sequence CCDHHEWCRFWASIGECNANKDWMTENCQLACGTC. C181 and C198 are oxidised to a cystine. N233 carries N-linked (GlcNAc...) asparagine glycosylation. H271 acts as the Proton acceptor in catalysis. Residue D272 coordinates Ca(2+). C284 and C294 are disulfide-bonded. T335, Y337, D339, and S341 together coordinate Ca(2+). H493 lines the heme b pocket. N-linked (GlcNAc...) asparagine glycans are attached at residues N509 and N617. 2 disulfide bridges follow: C588–C645 and C686–C710.

It belongs to the peroxidase family. Requires heme b as cofactor. In terms of tissue distribution, expressed in the hypodermal cells, specifically the head and seam/body.

It carries out the reaction 2 a phenolic donor + H2O2 = 2 a phenolic radical donor + 2 H2O. Functionally, plays an essential role in cuticle biogenesis. Required in combination with bli-3 for correct formation of cross-links in cuticle collagens. The sequence is that of Peroxidase mlt-7 from Caenorhabditis elegans.